The chain runs to 340 residues: Ferrochelatase (340 aa).

Fe cation is bound by residues histidine 218 and glutamate 298.

Belongs to the ferrochelatase family.

It is found in the cytoplasm. It carries out the reaction heme b + 2 H(+) = protoporphyrin IX + Fe(2+). Its pathway is porphyrin-containing compound metabolism; protoheme biosynthesis; protoheme from protoporphyrin-IX: step 1/1. Its function is as follows. Catalyzes the ferrous insertion into protoporphyrin IX. This Wolbachia sp. subsp. Brugia malayi (strain TRS) protein is Ferrochelatase.